The chain runs to 209 residues: Kunitz trypsin inhibitor 1 (209 aa).

The signal sequence occupies residues 1 to 22 (MKATISITTIFLVVALAAPSLA). Cystine bridges form between C63–C107 and C154–C162. The N-linked (GlcNAc...) asparagine glycan is linked to N156.

The protein belongs to the protease inhibitor I3 (leguminous Kunitz-type inhibitor) family.

In terms of biological role, exhibits Kunitz trypsin protease inhibitor activity. The chain is Kunitz trypsin inhibitor 1 from Arabidopsis thaliana (Mouse-ear cress).